Consider the following 680-residue polypeptide: tRNA 5-methylaminomethyl-2-thiouridine biosynthesis bifunctional protein MnmC (680 aa).

The tract at residues Met-1–Pro-267 is tRNA (mnm(5)s(2)U34)-methyltransferase. The FAD-dependent cmnm(5)s(2)U34 oxidoreductase stretch occupies residues Ile-273 to Leu-680.

The protein in the N-terminal section; belongs to the methyltransferase superfamily. tRNA (mnm(5)s(2)U34)-methyltransferase family. This sequence in the C-terminal section; belongs to the DAO family. FAD serves as cofactor.

The protein localises to the cytoplasm. It carries out the reaction 5-aminomethyl-2-thiouridine(34) in tRNA + S-adenosyl-L-methionine = 5-methylaminomethyl-2-thiouridine(34) in tRNA + S-adenosyl-L-homocysteine + H(+). Catalyzes the last two steps in the biosynthesis of 5-methylaminomethyl-2-thiouridine (mnm(5)s(2)U) at the wobble position (U34) in tRNA. Catalyzes the FAD-dependent demodification of cmnm(5)s(2)U34 to nm(5)s(2)U34, followed by the transfer of a methyl group from S-adenosyl-L-methionine to nm(5)s(2)U34, to form mnm(5)s(2)U34. The protein is tRNA 5-methylaminomethyl-2-thiouridine biosynthesis bifunctional protein MnmC of Shewanella putrefaciens (strain CN-32 / ATCC BAA-453).